The primary structure comprises 200 residues: Pyrrolidone-carboxylate peptidase (200 aa).

Catalysis depends on residues Glu-78, Cys-141, and His-165.

It belongs to the peptidase C15 family. Homotetramer.

It is found in the cytoplasm. The enzyme catalyses Release of an N-terminal pyroglutamyl group from a polypeptide, the second amino acid generally not being Pro.. Its function is as follows. Removes 5-oxoproline from various penultimate amino acid residues except L-proline. In Lactobacillus acidophilus (strain ATCC 700396 / NCK56 / N2 / NCFM), this protein is Pyrrolidone-carboxylate peptidase.